Here is a 481-residue protein sequence, read N- to C-terminus: Alkaline protease secretion protein AprF (481 aa).

The tract at residues proline 462–asparagine 481 is disordered. A compositionally biased stretch (basic and acidic residues) spans serine 469 to asparagine 481.

The protein belongs to the outer membrane factor (OMF) (TC 1.B.17) family.

The protein resides in the cell outer membrane. Functionally, involved in the secretion of alkaline protease. The protein is Alkaline protease secretion protein AprF (aprF) of Pseudomonas aeruginosa (strain ATCC 15692 / DSM 22644 / CIP 104116 / JCM 14847 / LMG 12228 / 1C / PRS 101 / PAO1).